Reading from the N-terminus, the 621-residue chain is uncharacterized protein (621 aa).

4 stretches are compositionally biased toward low complexity: residues 1–10, 63–79, 137–182, and 309–347; these read MIEDNINNNE, TEPL…TTPS, NNNN…NNFN, and NQSI…NNNN. Disordered regions lie at residues 1–29, 63–100, 135–194, 307–374, 430–471, 492–539, and 594–614; these read MIED…DKNN, TEPL…SNKT, DDNN…KDND, KTNQ…EDDT, YNNN…IAKR, KQSQ…IKII, and PTQI…SPSK. Positions 348–357 are enriched in polar residues; that stretch reads STLTSSNSLS. Composition is skewed to low complexity over residues 431–459, 496–539, and 597–613; these read NNNN…NNNN, NNNN…IKII, and INSN…SSPS.

This is an uncharacterized protein from Dictyostelium discoideum (Social amoeba).